The primary structure comprises 263 residues: Ribonuclease HII (263 aa).

In terms of domain architecture, RNase H type-2 spans 71–262; it reads QAIAGIDEVG…VKSMCCNSTN (192 aa). The a divalent metal cation site is built by D77, E78, and D172.

Belongs to the RNase HII family. It depends on Mn(2+) as a cofactor. The cofactor is Mg(2+).

It localises to the cytoplasm. It carries out the reaction Endonucleolytic cleavage to 5'-phosphomonoester.. Its function is as follows. Endonuclease that specifically degrades the RNA of RNA-DNA hybrids. This chain is Ribonuclease HII, found in Streptococcus pyogenes serotype M2 (strain MGAS10270).